Reading from the N-terminus, the 344-residue chain is Phenylalanine--tRNA ligase alpha subunit (344 aa).

E257 contributes to the Mg(2+) binding site.

This sequence belongs to the class-II aminoacyl-tRNA synthetase family. Phe-tRNA synthetase alpha subunit type 1 subfamily. In terms of assembly, tetramer of two alpha and two beta subunits. Mg(2+) serves as cofactor.

The protein resides in the cytoplasm. It catalyses the reaction tRNA(Phe) + L-phenylalanine + ATP = L-phenylalanyl-tRNA(Phe) + AMP + diphosphate + H(+). In Chlorobium chlorochromatii (strain CaD3), this protein is Phenylalanine--tRNA ligase alpha subunit.